The chain runs to 92 residues: MSRSLKKGPFVANHLLKKVQKLNDLDEKQVIKTWSRSSVIIPIMIGHTISIHNGKEHIPLYITDLMVGHKLGEFAPTRTFKGHIKKDKKSKR.

The protein belongs to the universal ribosomal protein uS19 family.

It is found in the plastid. It localises to the chloroplast. Functionally, protein S19 forms a complex with S13 that binds strongly to the 16S ribosomal RNA. The protein is Small ribosomal subunit protein uS19c of Tupiella akineta (Green alga).